Reading from the N-terminus, the 429-residue chain is Glutamate-1-semialdehyde 2,1-aminomutase (429 aa).

Lys264 is subject to N6-(pyridoxal phosphate)lysine.

This sequence belongs to the class-III pyridoxal-phosphate-dependent aminotransferase family. HemL subfamily. In terms of assembly, homodimer. It depends on pyridoxal 5'-phosphate as a cofactor.

The protein localises to the cytoplasm. It catalyses the reaction (S)-4-amino-5-oxopentanoate = 5-aminolevulinate. The protein operates within porphyrin-containing compound metabolism; protoporphyrin-IX biosynthesis; 5-aminolevulinate from L-glutamyl-tRNA(Glu): step 2/2. In Campylobacter curvus (strain 525.92), this protein is Glutamate-1-semialdehyde 2,1-aminomutase.